Here is a 119-residue protein sequence, read N- to C-terminus: Beta-2-microglobulin (119 aa).

A signal peptide spans 1–20; the sequence is MARFVVVALLALLSLSGLEA. The region spanning 25 to 114 is the Ig-like C1-type domain; it reads PKIQVYSRHP…VTFPTPKTVK (90 aa). Cys45 and Cys100 are disulfide-bonded.

Belongs to the beta-2-microglobulin family. Heterodimer of an alpha chain and a beta chain. Beta-2-microglobulin is the beta-chain of major histocompatibility complex class I molecules.

It is found in the secreted. Component of the class I major histocompatibility complex (MHC). Involved in the presentation of peptide antigens to the immune system. This is Beta-2-microglobulin (B2M) from Alouatta seniculus (Red howler monkey).